The chain runs to 69 residues: Neurotoxin Cex5 (69 aa).

Ala-1 is a signal peptide. The LCN-type CS-alpha/beta domain maps to 2-67 (KDGYLVSKST…TYPIPGKSCG (66 aa)). Disulfide bonds link Cys-13/Cys-66, Cys-17/Cys-42, Cys-26/Cys-47, and Cys-30/Cys-49. Cys-66 is modified (cysteine amide). Residues 67-69 (GKK) constitute a propeptide that is removed on maturation.

Belongs to the long (4 C-C) scorpion toxin superfamily. Sodium channel inhibitor family. Beta subfamily. As to expression, expressed by the venom gland.

It is found in the secreted. Its function is as follows. Beta toxins bind voltage-independently at site-4 of sodium channels (Nav) and shift the voltage of activation toward more negative potentials thereby affecting sodium channel activation and promoting spontaneous and repetitive firing. This Centruroides exilicauda (Bark scorpion) protein is Neurotoxin Cex5.